We begin with the raw amino-acid sequence, 128 residues long: Type-4 ice-structuring protein LS-12 (128 aa).

A signal peptide spans 1–20 (MKFSLVATIVLLALAQGSFA). Q21 carries the post-translational modification Pyrrolidone carboxylic acid.

Belongs to the apolipoprotein A1/A4/E family.

The protein resides in the secreted. Its function is as follows. Antifreeze proteins lower the blood freezing point. The polypeptide is Type-4 ice-structuring protein LS-12 (Myoxocephalus octodecemspinosus (Longhorn sculpin)).